Consider the following 339-residue polypeptide: Putative zinc metalloprotease FN1322 (339 aa).

Histidine 17 contacts Zn(2+). Glutamate 18 is an active-site residue. Histidine 21 serves as a coordination point for Zn(2+). Helical transmembrane passes span 88 to 110, 262 to 284, and 318 to 335; these read FIVL…FVTA, FGWI…LNLL, and GMIL…NDVW. The PDZ domain maps to 96 to 179; that stretch reads FMNFLMAFIL…ITALVERNGK (84 aa).

The protein belongs to the peptidase M50B family. The cofactor is Zn(2+).

Its subcellular location is the cell membrane. This is Putative zinc metalloprotease FN1322 from Fusobacterium nucleatum subsp. nucleatum (strain ATCC 25586 / DSM 15643 / BCRC 10681 / CIP 101130 / JCM 8532 / KCTC 2640 / LMG 13131 / VPI 4355).